Here is a 58-residue protein sequence, read N- to C-terminus: uncharacterized protein (58 aa).

Residues 12–32 traverse the membrane as a helical segment; the sequence is VMTLLITISILIVLAVLLVTI.

The protein localises to the cell membrane. This is an uncharacterized protein from Bacillus subtilis (strain 168).